The chain runs to 64 residues: Large ribosomal subunit protein bL35 (64 aa).

2 stretches are compositionally biased toward basic residues: residues methionine 1–arginine 15 and valine 23–leucine 33. The interval methionine 1 to arginine 47 is disordered. Residues glutamate 34–glycine 46 are compositionally biased toward basic and acidic residues.

The protein belongs to the bacterial ribosomal protein bL35 family.

The polypeptide is Large ribosomal subunit protein bL35 (Mycobacteroides abscessus (strain ATCC 19977 / DSM 44196 / CCUG 20993 / CIP 104536 / JCM 13569 / NCTC 13031 / TMC 1543 / L948) (Mycobacterium abscessus)).